Here is a 324-residue protein sequence, read N- to C-terminus: Integrin-binding sialoprotein (324 aa).

A signal peptide spans 1–16 (MKTALILLSILGMACA). Phosphoserine is present on residues Ser-31, Ser-67, Ser-75, Ser-76, and Ser-95. Disordered regions lie at residues 60 to 228 (VQGG…GREL) and 243 to 263 (QQTT…RKSS). Residues 66 to 105 (SSEENGDGDSSEEEGEEEETSNEEENNEDSEGNEDQEAEA) show a composition bias toward acidic residues. Over residues 106–130 (ENSTLSTLSGVTASYGAETTPQAQT) the composition is skewed to polar residues. Residue Asn-107 is glycosylated (N-linked (GlcNAc...) asparagine). Over residues 141 to 154 (KAGDAESRAPKVKE) the composition is skewed to basic and acidic residues. Ser-155 carries the phosphoserine modification. Over residues 155–179 (SDEEEEEEEEEEENENEEAEVDENE) the composition is skewed to acidic residues. N-linked (GlcNAc...) asparagine glycans are attached at residues Asn-183, Asn-188, and Asn-196. Positions 203 to 213 (NGEEAEAEEAS) are enriched in acidic residues. Positions 253–263 (GTTSPPIRKSS) are enriched in polar residues. Positions 293-295 (RGD) match the Integrin-binding motif motif. Tyr-320 and Tyr-321 each carry sulfotyrosine.

As to quaternary structure, monomer. Interacts with integrins; the interaction promotes cell adhesion.

It is found in the secreted. Its function is as follows. Binds tightly to hydroxyapatite. Appears to form an integral part of the mineralized matrix. Probably important to cell-matrix interaction. Promotes adhesion and migration of various cells via the alpha-V/beta-3 integrin receptor (ITGAV:ITGB3). The protein is Integrin-binding sialoprotein (Ibsp) of Mus musculus (Mouse).